A 238-amino-acid chain; its full sequence is Ribosomal RNA small subunit methyltransferase G (238 aa).

S-adenosyl-L-methionine contacts are provided by residues Gly-75, Leu-80, 126–127 (AE), and Arg-142.

Belongs to the methyltransferase superfamily. RNA methyltransferase RsmG family.

It is found in the cytoplasm. Its function is as follows. Specifically methylates the N7 position of guanine in position 518 of 16S rRNA. In Streptomyces avermitilis (strain ATCC 31267 / DSM 46492 / JCM 5070 / NBRC 14893 / NCIMB 12804 / NRRL 8165 / MA-4680), this protein is Ribosomal RNA small subunit methyltransferase G.